Consider the following 187-residue polypeptide: Peptide deformylase (187 aa).

Positions 114 and 157 each coordinate Fe cation. Glu158 is an active-site residue. Residue His161 coordinates Fe cation.

It belongs to the polypeptide deformylase family. Fe(2+) serves as cofactor.

It catalyses the reaction N-terminal N-formyl-L-methionyl-[peptide] + H2O = N-terminal L-methionyl-[peptide] + formate. Its function is as follows. Removes the formyl group from the N-terminal Met of newly synthesized proteins. Requires at least a dipeptide for an efficient rate of reaction. N-terminal L-methionine is a prerequisite for activity but the enzyme has broad specificity at other positions. This is Peptide deformylase from Enterococcus faecalis (strain ATCC 700802 / V583).